Reading from the N-terminus, the 442-residue chain is Decapping and exoribonuclease protein 1 (442 aa).

Residues 31–40 (QSKLCKEKTT) show a composition bias toward basic and acidic residues. The segment at 31-56 (QSKLCKEKTTSDSSSSRKPSQQRDNY) is disordered. The segment covering 41 to 53 (SDSSSSRKPSQQR) has biased composition (low complexity). Arginine 101 serves as a coordination point for substrate. Glutamate 255 is an a divalent metal cation binding site. Residue glutamate 293 coordinates substrate. Aspartate 295, glutamate 306, and leucine 307 together coordinate a divalent metal cation. The substrate site is built by lysine 308 and glutamine 330.

It belongs to the DXO/Dom3Z family. A divalent metal cation is required as a cofactor.

It localises to the cytoplasm. It catalyses the reaction a 5'-end NAD(+)-phospho-ribonucleoside in mRNA + H2O = a 5'-end phospho-ribonucleoside in mRNA + NAD(+) + H(+). It carries out the reaction a 5'-end (N(7)-methyl 5'-triphosphoguanosine)-ribonucleoside-ribonucleotide in mRNA + H2O = a (N(7)-methyl 5'-triphosphoguanosine)-nucleoside + a 5'-end phospho-ribonucleoside in mRNA + H(+). Functionally, decapping enzyme for NAD-capped RNAs: specifically hydrolyzes the nicotinamide adenine dinucleotide (NAD) cap from a subset of RNAs by removing the entire NAD moiety from the 5'-end of an NAD-capped RNA. The NAD-cap is present at the 5'-end of some RNAs and snoRNAs. In contrast to the canonical 5'-end N7 methylguanosine (m7G) cap, the NAD cap promotes mRNA decay. Also acts as a non-canonical decapping enzyme that removes the entire cap structure of m7G capped or incompletely capped RNAs. Has decapping activity toward incomplete 5'-end m7G cap mRNAs such as unmethylated 5'-end-capped RNA (cap0), while it has no activity toward 2'-O-ribose methylated m7G cap (cap1). Also has 5'-3' exonuclease activity. In Saccharomyces cerevisiae (strain ATCC 204508 / S288c) (Baker's yeast), this protein is Decapping and exoribonuclease protein 1 (DXO1).